The primary structure comprises 92 residues: Small ribosomal subunit protein uS19c (92 aa).

The protein belongs to the universal ribosomal protein uS19 family. In terms of assembly, component of the chloroplast small ribosomal subunit (SSU). Mature 70S chloroplast ribosomes of higher plants consist of a small (30S) and a large (50S) subunit. The 30S small subunit contains 1 molecule of ribosomal RNA (16S rRNA) and 24 different proteins. The 50S large subunit contains 3 rRNA molecules (23S, 5S and 4.5S rRNA) and 33 different proteins. uS19c binds directly to 16S ribosomal RNA.

Its subcellular location is the plastid. The protein resides in the chloroplast. In terms of biological role, component of the chloroplast ribosome (chloro-ribosome), a dedicated translation machinery responsible for the synthesis of chloroplast genome-encoded proteins, including proteins of the transcription and translation machinery and components of the photosynthetic apparatus. The chain is Small ribosomal subunit protein uS19c (rps19) from Spinacia oleracea (Spinach).